The primary structure comprises 392 residues: SH3 domain-binding protein 5-like (392 aa).

A disordered region spans residues 1–57 (MADLKKAAGGRETPQGELRSEVVEDEGPRSPVAEEPGGSGSNSSETKLSPREEEELD). T13 is subject to Phosphothreonine. Over residues 18–28 (LRSEVVEDEGP) the composition is skewed to basic and acidic residues. 2 positions are modified to phosphoserine: S30 and S49. Coiled-coil stretches lie at residues 59 to 140 (RIQE…YERA) and 169 to 272 (WQEM…EQIH). The tract at residues 275-332 (RRGLPPHPLGPRRSSPVGAEAGPEGIEDGDSGIEGAEGGGLEEGSSLGPGPGPDTDTL) is disordered. Positions 317-332 (EGSSLGPGPGPDTDTL) are enriched in low complexity. Residues S342, S349, S357, S361, and S377 each carry the phosphoserine modification. Residues 364-392 (GQELGAQSRGRRGSDIGVRGGRHQRSVSL) form a disordered region. Basic residues predominate over residues 383–392 (GGRHQRSVSL).

This sequence belongs to the SH3BP5 family.

Functionally, functions as a guanine nucleotide exchange factor (GEF) for RAB11A. The polypeptide is SH3 domain-binding protein 5-like (Sh3bp5l) (Mus musculus (Mouse)).